The sequence spans 111 residues: DNA-directed RNA polymerase subunit Rpo11 (111 aa).

It belongs to the archaeal Rpo11/eukaryotic RPB11/RPC19 RNA polymerase subunit family. As to quaternary structure, part of the RNA polymerase complex.

Its subcellular location is the cytoplasm. It catalyses the reaction RNA(n) + a ribonucleoside 5'-triphosphate = RNA(n+1) + diphosphate. DNA-dependent RNA polymerase (RNAP) catalyzes the transcription of DNA into RNA using the four ribonucleoside triphosphates as substrates. The polypeptide is DNA-directed RNA polymerase subunit Rpo11 (Thermoplasma acidophilum (strain ATCC 25905 / DSM 1728 / JCM 9062 / NBRC 15155 / AMRC-C165)).